The sequence spans 120 residues: Putative defensin-like protein 179 (120 aa).

An N-terminal signal peptide occupies residues 1–27; sequence MERTSTSLLFLLSLLIIFASAVNQIRA. Cystine bridges form between Cys-37/Cys-56, Cys-40/Cys-63, Cys-44/Cys-65, Cys-74/Cys-120, Cys-85/Cys-105, Cys-90/Cys-114, and Cys-94/Cys-116.

This sequence belongs to the DEFL family.

The protein resides in the secreted. This is Putative defensin-like protein 179 (LCR57) from Arabidopsis thaliana (Mouse-ear cress).